The following is a 270-amino-acid chain: Glutamate 5-kinase (270 aa).

Position 15 (Lys-15) interacts with ATP. Ser-55, Asp-142, and Asn-158 together coordinate substrate. ATP is bound by residues 178-179 (SD) and 220-226 (TGGMLSK).

The protein belongs to the glutamate 5-kinase family.

It is found in the cytoplasm. The catalysed reaction is L-glutamate + ATP = L-glutamyl 5-phosphate + ADP. It participates in amino-acid biosynthesis; L-proline biosynthesis; L-glutamate 5-semialdehyde from L-glutamate: step 1/2. In terms of biological role, catalyzes the transfer of a phosphate group to glutamate to form L-glutamate 5-phosphate. In Streptococcus uberis (strain ATCC BAA-854 / 0140J), this protein is Glutamate 5-kinase.